A 410-amino-acid chain; its full sequence is Putative ribonuclease E (410 aa).

Residues 39–119 (SNIYKGKIVR…GTKGALLTTF (81 aa)) enclose the S1 motif domain. Mg(2+)-binding residues include aspartate 303 and aspartate 346.

The protein belongs to the RNase E/G family. RNase E subfamily. In terms of assembly, component of the RNA degradosome, which is a multiprotein complex involved in RNA processing and mRNA degradation. Within the RNA degradosome, RNase E assembles into a homotetramer formed by a dimer of dimers. Mg(2+) serves as cofactor.

The protein localises to the cytoplasm. It localises to the cell inner membrane. The catalysed reaction is Endonucleolytic cleavage of single-stranded RNA in A- and U-rich regions.. Functionally, endoribonuclease that plays a central role in RNA processing and decay. Required for the maturation of 5S and 16S rRNAs and the majority of tRNAs. Also involved in the degradation of most mRNAs. The polypeptide is Putative ribonuclease E (rne) (Buchnera aphidicola subsp. Baizongia pistaciae (strain Bp)).